We begin with the raw amino-acid sequence, 809 residues long: MNIQTTVEPTSAERAEKLQGMGCKRKRVEDIRFTQGKGNYVDDVKLPGMLFGDFVRSSHAHARIKSIDTSKAKALPGVFAVLTAADLKPLNLHYMPTLAGDVQAVLADEKVLFQNQEVAFVVAKDRYVAADAIELVEVDYEPLPVLVDPFKAMEPDAPLLREDIKDKMTGAHGARKHHNHIFRWEIGDKEGTDATFAKAEVVSKDMFTYHRVHPSPLETCQCVASMDKIKGELTLWGTFQAPHVIRTVVSLISGLPEHKIHVIAPDIGGGFGNKVGAYSGYVCAVVASIVLGVPVKWVEDRMENLSTTSFARDYHMTTELAATKDGKILAMRCHVLADHGAFDACADPSKWPAGFMNICTGSYDMPVAHLAVDGVYTNKASGGVAYRCSFRVTEAVYAIERAIETLAQRLEMDSADLRIKNFIQPEQFPYMAPLGWEYDSGNYPLAMKKAMDTVGYHQLRAEQKAKQEAFKRGETREIMGIGISFFTEIVGAGPSKNCDILGVSMFDSAEIRIHPTGSVIARMGTKSQGQGHETTYAQIIATELGIPADDIMIEEGNTDTAPYGLGTYGSRSTPTAGAATAVAARKIKAKAQMIAAHMLEVHEGDLEWDVDRFRVKGLPEKFKTMKELAWASYNSPPPNLEPGLEAVNYYDPPNMTYPFGAYFCIMDIDVDTGVAKTRRFYALDDCGTRINPMIIEGQVHGGLTEAFAVAMGQEIRYDEQGNVLGASFMDFFLPTAVETPKWETDYTVTPSPHHPIGAKGVGESPHVGGVPCFSNAVNDAYAFLNAGHIQMPHDAWRLWKVGEQLGLHV.

Cys-388 lines the Cu(+) pocket. Glu-763 lines the Mo-molybdopterin cytosine dinucleotide pocket.

In terms of assembly, dimer of heterotrimers. Each heterotrimer consists of a large, a medium and a small subunit. The cofactor is Cu(+). Mo-molybdopterin cytosine dinucleotide serves as cofactor.

It catalyses the reaction CO + a quinone + H2O = a quinol + CO2. Functionally, catalyzes the oxidation of carbon monoxide to carbon dioxide. In Afipia carboxidovorans (strain ATCC 49405 / DSM 1227 / KCTC 32145 / OM5) (Oligotropha carboxidovorans), this protein is Carbon monoxide dehydrogenase large chain (coxL).